The following is a 258-amino-acid chain: Small ribosomal subunit protein uS2 (258 aa).

The tract at residues 226–258 is disordered; that stretch reads AQNKDVEPVADKDEKPEAAPVDEAETATETTGE. Residues 229–242 show a composition bias toward basic and acidic residues; it reads KDVEPVADKDEKPE. Over residues 245-258 the composition is skewed to acidic residues; the sequence is PVDEAETATETTGE.

It belongs to the universal ribosomal protein uS2 family.

The protein is Small ribosomal subunit protein uS2 of Solidesulfovibrio magneticus (strain ATCC 700980 / DSM 13731 / RS-1) (Desulfovibrio magneticus).